Here is a 483-residue protein sequence, read N- to C-terminus: Ero1-like protein (483 aa).

Positions 1 to 29 (MTTRTVQRNLWASAAVVLVLLLLWTDTTG) are cleaved as a signal peptide. 6 disulfides stabilise this stretch: Cys44-Cys57, Cys46-Cys55, Cys94-Cys402, Cys103-Cys108, Cys227-Cys251, and Cys405-Cys408. The FAD site is built by Arg206, Thr208, and Trp219. Residue Asn232 is glycosylated (N-linked (GlcNAc...) asparagine). 3 residues coordinate FAD: Ser262, His265, and Arg301. Asn395 carries an N-linked (GlcNAc...) asparagine glycan.

This sequence belongs to the EROs family. As to quaternary structure, may function both as a monomer and a homodimer. FAD is required as a cofactor.

Its subcellular location is the endoplasmic reticulum membrane. Oxidoreductase involved in disulfide bond formation in the endoplasmic reticulum. Efficiently reoxidizes pdi-1, the enzyme catalyzing protein disulfide formation, in order to allow pdi-1 to sustain additional rounds of disulfide formation. Following pdi reoxidation, passes its electrons to molecular oxygen via FAD, leading to the production of reactive oxygen species (ROS) in the cell. The sequence is that of Ero1-like protein (Ero1L) from Drosophila melanogaster (Fruit fly).